The primary structure comprises 493 residues: Probable cytosol aminopeptidase (493 aa).

Positions 262 and 267 each coordinate Mn(2+). K274 is a catalytic residue. Mn(2+) contacts are provided by D286, D345, and E347. Residue R349 is part of the active site.

The protein belongs to the peptidase M17 family. Mn(2+) is required as a cofactor.

Its subcellular location is the cytoplasm. It catalyses the reaction Release of an N-terminal amino acid, Xaa-|-Yaa-, in which Xaa is preferably Leu, but may be other amino acids including Pro although not Arg or Lys, and Yaa may be Pro. Amino acid amides and methyl esters are also readily hydrolyzed, but rates on arylamides are exceedingly low.. It carries out the reaction Release of an N-terminal amino acid, preferentially leucine, but not glutamic or aspartic acids.. Its function is as follows. Presumably involved in the processing and regular turnover of intracellular proteins. Catalyzes the removal of unsubstituted N-terminal amino acids from various peptides. In Cyanothece sp. (strain PCC 7425 / ATCC 29141), this protein is Probable cytosol aminopeptidase.